The following is a 302-amino-acid chain: 4-hydroxy-tetrahydrodipicolinate synthase (302 aa).

Pyruvate is bound at residue Thr55. The active-site Proton donor/acceptor is Tyr143. Lys171 serves as the catalytic Schiff-base intermediate with substrate. Pyruvate is bound at residue Ile213.

The protein belongs to the DapA family. Homotetramer; dimer of dimers.

It localises to the cytoplasm. It carries out the reaction L-aspartate 4-semialdehyde + pyruvate = (2S,4S)-4-hydroxy-2,3,4,5-tetrahydrodipicolinate + H2O + H(+). It participates in amino-acid biosynthesis; L-lysine biosynthesis via DAP pathway; (S)-tetrahydrodipicolinate from L-aspartate: step 3/4. Its function is as follows. Catalyzes the condensation of (S)-aspartate-beta-semialdehyde [(S)-ASA] and pyruvate to 4-hydroxy-tetrahydrodipicolinate (HTPA). The polypeptide is 4-hydroxy-tetrahydrodipicolinate synthase (Psychrobacter sp. (strain PRwf-1)).